We begin with the raw amino-acid sequence, 207 residues long: Large ribosomal subunit protein uL4 (207 aa).

A disordered region spans residues 50–76 (KTKTVSEVSGTTKKPFKQKGTGNARQG).

This sequence belongs to the universal ribosomal protein uL4 family. Part of the 50S ribosomal subunit.

Functionally, one of the primary rRNA binding proteins, this protein initially binds near the 5'-end of the 23S rRNA. It is important during the early stages of 50S assembly. It makes multiple contacts with different domains of the 23S rRNA in the assembled 50S subunit and ribosome. In terms of biological role, forms part of the polypeptide exit tunnel. This chain is Large ribosomal subunit protein uL4, found in Rickettsia typhi (strain ATCC VR-144 / Wilmington).